A 615-amino-acid polypeptide reads, in one-letter code: Dihydroxy-acid dehydratase (615 aa).

Asp81 contributes to the Mg(2+) binding site. Cys122 is a [2Fe-2S] cluster binding site. 2 residues coordinate Mg(2+): Asp123 and Lys124. An N6-carboxylysine modification is found at Lys124. [2Fe-2S] cluster is bound at residue Cys195. Residue Glu491 coordinates Mg(2+). Catalysis depends on Ser517, which acts as the Proton acceptor.

Belongs to the IlvD/Edd family. Homodimer. [2Fe-2S] cluster serves as cofactor. It depends on Mg(2+) as a cofactor.

The catalysed reaction is (2R)-2,3-dihydroxy-3-methylbutanoate = 3-methyl-2-oxobutanoate + H2O. It catalyses the reaction (2R,3R)-2,3-dihydroxy-3-methylpentanoate = (S)-3-methyl-2-oxopentanoate + H2O. It functions in the pathway amino-acid biosynthesis; L-isoleucine biosynthesis; L-isoleucine from 2-oxobutanoate: step 3/4. Its pathway is amino-acid biosynthesis; L-valine biosynthesis; L-valine from pyruvate: step 3/4. In terms of biological role, functions in the biosynthesis of branched-chain amino acids. Catalyzes the dehydration of (2R,3R)-2,3-dihydroxy-3-methylpentanoate (2,3-dihydroxy-3-methylvalerate) into 2-oxo-3-methylpentanoate (2-oxo-3-methylvalerate) and of (2R)-2,3-dihydroxy-3-methylbutanoate (2,3-dihydroxyisovalerate) into 2-oxo-3-methylbutanoate (2-oxoisovalerate), the penultimate precursor to L-isoleucine and L-valine, respectively. This is Dihydroxy-acid dehydratase from Pseudoalteromonas atlantica (strain T6c / ATCC BAA-1087).